The primary structure comprises 111 residues: Large ribosomal subunit protein uL24 (111 aa).

Residues 85 to 111 (NTNDPRRKDIINRKASRQKEEQGGKAQ) form a disordered region. The segment covering 88–111 (DPRRKDIINRKASRQKEEQGGKAQ) has biased composition (basic and acidic residues).

The protein belongs to the universal ribosomal protein uL24 family. As to quaternary structure, part of the 50S ribosomal subunit.

Its function is as follows. One of two assembly initiator proteins, it binds directly to the 5'-end of the 23S rRNA, where it nucleates assembly of the 50S subunit. Functionally, located at the polypeptide exit tunnel on the outside of the subunit. In Metallosphaera sedula (strain ATCC 51363 / DSM 5348 / JCM 9185 / NBRC 15509 / TH2), this protein is Large ribosomal subunit protein uL24.